We begin with the raw amino-acid sequence, 653 residues long: Protein SCARECROW (653 aa).

Disordered regions lie at residues 1-69 and 193-265; these read MAES…RRVS and PSSS…AVQT. Over residues 17-31 the composition is skewed to low complexity; the sequence is PLRTTSSGSSSSNNR. The span at 32-41 shows a compositional bias: pro residues; it reads GPPPPPPPPL. The span at 51-63 shows a compositional bias: polar residues; the sequence is EMSSNPDYNNSSR. Residues 209-230 show a composition bias toward low complexity; the sequence is QISNNPSPPQQQQQHQQQQQQH. The segment covering 246 to 265 has biased composition (polar residues); sequence STDAPPQPETVTATVPAVQT. The GRAS domain maps to 281–650; the sequence is QKQDEEGLHL…LSLLTASAWT (370 aa). The segment at 288–351 is leucine repeat I (LRI); it reads LHLLTLLLQC…LLNSCLGIYA (64 aa). A LxCxE motif motif is present at residues 295-299; that stretch reads LQCAE. Residues 370–435 are VHIID; it reads FQVFNGISPL…GGPPHVRLTG (66 aa). Positions 401 to 405 match the VHIID motif; it reads VHIID. The leucine repeat II (LRII) stretch occupies residues 445 to 477; that stretch reads ATGKRLSDFADKLGLPFEFCPLAEKVGNLDTER. The PFYRE stretch occupies residues 486 to 573; that stretch reads VAVHWLQHSL…QQLLSKEIRN (88 aa). Positions 576–650 are SAW; it reads AVGGPSRSGE…LSLLTASAWT (75 aa).

The protein belongs to the GRAS family. In terms of assembly, interacts with SHR, JKD and MGP. Interacts with SIEL. Interacts with RBR1 through its the LxCxE motif. In terms of tissue distribution, expressed in siliques, leaves and roots. Detected in the initial daughter cell before its asymmetric division and remains expressed only in the endodermal cell layer after the division. Expressed in the endodermis or starch sheath of the seedling hypocotyl, in the leaf bundle sheath cells and the root quiescent center.

The protein resides in the nucleus. Transcription factor required for quiescent center cells specification and maintenance of surrounding stem cells, and for the asymmetric cell division involved in radial pattern formation in roots. Essential for cell division but not differentiation of the ground tissue. Also required for normal shoot gravitropism. Regulates the radial organization of the shoot axial organs. Binds to the promoter of MGP, NUC, RLK and SCL3. Restricts SHR movment and sequesters it into the nucleus of the endodermis. This Arabidopsis thaliana (Mouse-ear cress) protein is Protein SCARECROW.